Here is a 428-residue protein sequence, read N- to C-terminus: Light-independent protochlorophyllide reductase subunit N (428 aa).

Cysteine 29, cysteine 54, and cysteine 115 together coordinate [4Fe-4S] cluster.

This sequence belongs to the BchN/ChlN family. Protochlorophyllide reductase is composed of three subunits; BchL, BchN and BchB. Forms a heterotetramer of two BchB and two BchN subunits. [4Fe-4S] cluster serves as cofactor.

It carries out the reaction chlorophyllide a + oxidized 2[4Fe-4S]-[ferredoxin] + 2 ADP + 2 phosphate = protochlorophyllide a + reduced 2[4Fe-4S]-[ferredoxin] + 2 ATP + 2 H2O. Its pathway is porphyrin-containing compound metabolism; bacteriochlorophyll biosynthesis (light-independent). Its function is as follows. Component of the dark-operative protochlorophyllide reductase (DPOR) that uses Mg-ATP and reduced ferredoxin to reduce ring D of protochlorophyllide (Pchlide) to form chlorophyllide a (Chlide). This reaction is light-independent. The NB-protein (BchN-BchB) is the catalytic component of the complex. This is Light-independent protochlorophyllide reductase subunit N from Cereibacter sphaeroides (strain ATCC 17029 / ATH 2.4.9) (Rhodobacter sphaeroides).